The primary structure comprises 417 residues: MLEQMGKQAKDAAFILAQLTTAEKNCALSIIAEQLEQQAPLILAENAKDIELAKQNGLSDALIDRLLLTQERLQGIANDVRHVISLADPVGKIIDGGTLDSGLKIERVRTPLGVIGTIYEARPNVTIDVASLCLKTGNAVILRGGKETQFSNKILIEVVQNALEQAGLPKFAVQAITDPNRELVMQLLKLDRYVDMIIPRGGSGLHELCKQHSTIPVIVGGVGVCHTFVEKSADQNKAIFVIDNAKTQRPSTCNTLETLLVQHSIAEEFLPKLVSHLSAKNVKYHAKSTALNILKQAGANVCEVTEKELRKEWGSLDLNVVVVEDIHAAIEHIRQYGTQHSESILTSSQSLARQFINQVDAAAVYVNASTRFTDGGQFGLGAEVAVSTQKLHARGPMGLEALTSYKWVCEGEYTVRK.

Belongs to the gamma-glutamyl phosphate reductase family.

It is found in the cytoplasm. The catalysed reaction is L-glutamate 5-semialdehyde + phosphate + NADP(+) = L-glutamyl 5-phosphate + NADPH + H(+). Its pathway is amino-acid biosynthesis; L-proline biosynthesis; L-glutamate 5-semialdehyde from L-glutamate: step 2/2. Functionally, catalyzes the NADPH-dependent reduction of L-glutamate 5-phosphate into L-glutamate 5-semialdehyde and phosphate. The product spontaneously undergoes cyclization to form 1-pyrroline-5-carboxylate. This Haemophilus influenzae (strain ATCC 51907 / DSM 11121 / KW20 / Rd) protein is Gamma-glutamyl phosphate reductase.